Consider the following 327-residue polypeptide: Beta-ketoacyl-[acyl-carrier-protein] synthase III 2 (327 aa).

Catalysis depends on residues C114 and H251. Residues 252–256 (SANLR) are ACP-binding. N281 is a catalytic residue.

Belongs to the thiolase-like superfamily. FabH family. In terms of assembly, homodimer.

It localises to the cytoplasm. The enzyme catalyses malonyl-[ACP] + acetyl-CoA + H(+) = 3-oxobutanoyl-[ACP] + CO2 + CoA. Its pathway is lipid metabolism; fatty acid biosynthesis. Catalyzes the condensation reaction of fatty acid synthesis by the addition to an acyl acceptor of two carbons from malonyl-ACP. Catalyzes the first condensation reaction which initiates fatty acid synthesis and may therefore play a role in governing the total rate of fatty acid production. Possesses both acetoacetyl-ACP synthase and acetyl transacylase activities. Its substrate specificity determines the biosynthesis of branched-chain and/or straight-chain of fatty acids. The sequence is that of Beta-ketoacyl-[acyl-carrier-protein] synthase III 2 from Bacillus anthracis.